Here is a 283-residue protein sequence, read N- to C-terminus: Cytosolic Fe-S cluster assembly factor CFD1 (283 aa).

26–33 (GKGGVGKS) is a binding site for ATP. [4Fe-4S] cluster-binding residues include C202 and C205.

Belongs to the Mrp/NBP35 ATP-binding proteins family. NUBP2/CFD1 subfamily. In terms of assembly, heterotetramer of 2 NBP35 and 2 CFD1 chains. [4Fe-4S] cluster is required as a cofactor.

The protein resides in the cytoplasm. Functionally, component of the cytosolic iron-sulfur (Fe/S) protein assembly (CIA) machinery. Required for maturation of extramitochondrial Fe-S proteins. The NBP35-CFD1 heterotetramer forms a Fe-S scaffold complex, mediating the de novo assembly of an Fe-S cluster and its transfer to target apoproteins. Required for biogenesis and export of both ribosomal subunits, which may reflect a role in assembly of the Fe/S clusters in RLI1, a protein which performs rRNA processing and ribosome export. In Kluyveromyces lactis (strain ATCC 8585 / CBS 2359 / DSM 70799 / NBRC 1267 / NRRL Y-1140 / WM37) (Yeast), this protein is Cytosolic Fe-S cluster assembly factor CFD1.